The following is a 63-amino-acid chain: Large ribosomal subunit protein bL28 (63 aa).

The tract at residues 1–20 is disordered; sequence MSRRCAITGKGPMVGNNVSH.

Belongs to the bacterial ribosomal protein bL28 family.

The chain is Large ribosomal subunit protein bL28 from Campylobacter curvus (strain 525.92).